The following is a 336-amino-acid chain: UDP-N-acetylmuramoylpentapeptide-lysine N(6)-alanyltransferase (336 aa).

Residues 37-40 (KNNW), Y104, R212, Y216, and Y257 contribute to the substrate site.

The protein belongs to the FemABX family.

The catalysed reaction is UDP-N-acetyl-alpha-D-muramoyl-L-alanyl-gamma-D-glutamyl-L-lysyl-D-alanyl-D-alanine + L-alanyl-tRNA(Ala) = UDP-N-acetyl-alpha-D-muramoyl-L-alanyl-gamma-D-glutamyl-N(6)-(L-alanyl)-L-lysyl-D-alanyl-D-alanine + tRNA(Ala) + H(+). Involved in the synthesis of the bacterial cell wall. Catalyzes the addition of alanine into the interchain peptide bridge of peptidoglycan precursor using aminoacyl-tRNA(Ala) as amino acid donor. This alanine is added to the epsilon-amino group of the L-lysine of the peptidoglycan UDP-N-acetyl-alpha-D-muramoyl-L-alanyl-D-glutamyl-L-lysyl-D-alanyl-D-alanine, in a ribosome-independent mechanism. Specific for UDP-N-acetyl-muramoyl-pentapeptide. Has no activity toward UDP-N-acetyl-muramoyl-tetrapeptide or UDP-N-acetyl-muramoyl-tripeptide. Also acts on L-seryl-tRNA(Ser). This Weissella viridescens (Lactobacillus viridescens) protein is UDP-N-acetylmuramoylpentapeptide-lysine N(6)-alanyltransferase.